A 343-amino-acid chain; its full sequence is Heat-inducible transcription repressor HrcA (343 aa).

It belongs to the HrcA family.

Functionally, negative regulator of class I heat shock genes (grpE-dnaK-dnaJ and groELS operons). Prevents heat-shock induction of these operons. This is Heat-inducible transcription repressor HrcA from Mycobacterium ulcerans (strain Agy99).